The following is a 186-amino-acid chain: Casparian strip membrane protein 1 (186 aa).

The Cytoplasmic portion of the chain corresponds to Met1–Ser26. A helical membrane pass occupies residues Ile27–Met47. Over Gly48–Ser72 the chain is Extracellular. Residues Phe73–Leu93 traverse the membrane as a helical segment. Topologically, residues Ser94 to Arg107 are cytoplasmic. Residues Ile108–Ala128 traverse the membrane as a helical segment. The Extracellular portion of the chain corresponds to Ala129–Arg157. Residues Ile158–Leu178 form a helical membrane-spanning segment. Topologically, residues Ser179 to Asn186 are cytoplasmic.

This sequence belongs to the Casparian strip membrane proteins (CASP) family. As to quaternary structure, homodimer and heterodimers.

The protein resides in the cell membrane. Functionally, regulates membrane-cell wall junctions and localized cell wall deposition. Required for establishment of the Casparian strip membrane domain (CSD) and the subsequent formation of Casparian strips, a cell wall modification of the root endodermis that determines an apoplastic barrier between the intraorganismal apoplasm and the extraorganismal apoplasm and prevents lateral diffusion. The sequence is that of Casparian strip membrane protein 1 from Medicago truncatula (Barrel medic).